A 336-amino-acid polypeptide reads, in one-letter code: MSSNSFLTPRIVEVHNISPLHAKVVMEPFEHGFGYTLGNALRRVLLSSIPGCAPTKVSISGVVHEYSTIDGLQEDVVDLILNLKGVVLKLHNNKTQSVLTLKKSSEGIVTAGDIEATHDVEIVNPDHVIAHITSGGKIEAQITVEKGRGYWPSANRSKEDKSSSSIGDILLDASFSPIRRVSYAVESARVEQRTDLDKLIIDIETNGSVDPEEAIRYAAKVLVEQFSFFADLESTPLPTEQPKAPVIDPILLRPVDDLELTVRSANCLKVENIFYIGDLIQRTEAELLRTPNLGRKSLNEIKEVLASRDLSLGMKLENWPPANLENYIKEPGHASS.

Positions 1–233 are alpha N-terminal domain (alpha-NTD); that stretch reads MSSNSFLTPR…EQFSFFADLE (233 aa). Positions 247-336 are alpha C-terminal domain (alpha-CTD); that stretch reads IDPILLRPVD…YIKEPGHASS (90 aa).

This sequence belongs to the RNA polymerase alpha chain family. Homodimer. The RNAP catalytic core consists of 2 alpha, 1 beta, 1 beta' and 1 omega subunit. When a sigma factor is associated with the core the holoenzyme is formed, which can initiate transcription.

It catalyses the reaction RNA(n) + a ribonucleoside 5'-triphosphate = RNA(n+1) + diphosphate. DNA-dependent RNA polymerase catalyzes the transcription of DNA into RNA using the four ribonucleoside triphosphates as substrates. This is DNA-directed RNA polymerase subunit alpha from Nitrosomonas europaea (strain ATCC 19718 / CIP 103999 / KCTC 2705 / NBRC 14298).